Reading from the N-terminus, the 438-residue chain is Trigger factor (438 aa).

The region spanning 163–248 (GDTAIIDFAG…VKEIKRKEIA (86 aa)) is the PPIase FKBP-type domain.

Belongs to the FKBP-type PPIase family. Tig subfamily.

It is found in the cytoplasm. The enzyme catalyses [protein]-peptidylproline (omega=180) = [protein]-peptidylproline (omega=0). Its function is as follows. Involved in protein export. Acts as a chaperone by maintaining the newly synthesized protein in an open conformation. Functions as a peptidyl-prolyl cis-trans isomerase. The protein is Trigger factor of Pelotomaculum thermopropionicum (strain DSM 13744 / JCM 10971 / SI).